Reading from the N-terminus, the 217-residue chain is ATP synthase subunit a (217 aa).

A run of 6 helical transmembrane segments spans residues 5 to 25, 63 to 83, 89 to 109, 120 to 140, 157 to 177, and 191 to 213; these read EHVITSIVAMVVALGVVLAAG, LIASIGLFVFFGNVMELLPFV, NINTTLALTLIVFFLYHFEGF, FMGPIKALAPFFFIIEIMSHL, GAILLISIIGVLIGNPFTLAV, and LAIVLQAFIFMILSTIYIAGAVV.

Belongs to the ATPase A chain family. F-type ATPases have 2 components, CF(1) - the catalytic core - and CF(0) - the membrane proton channel. CF(1) has five subunits: alpha(3), beta(3), gamma(1), delta(1), epsilon(1). CF(0) has three main subunits: a(1), b(2) and c(9-12). The alpha and beta chains form an alternating ring which encloses part of the gamma chain. CF(1) is attached to CF(0) by a central stalk formed by the gamma and epsilon chains, while a peripheral stalk is formed by the delta and b chains.

Its subcellular location is the cell inner membrane. Functionally, key component of the proton channel; it plays a direct role in the translocation of protons across the membrane. The protein is ATP synthase subunit a of Hydrogenobaculum sp. (strain Y04AAS1).